The following is a 441-amino-acid chain: GTPase Der (441 aa).

EngA-type G domains are found at residues 3 to 167 (PLIA…PKGS) and 176 to 351 (TKIA…EQFA). Residues 9–16 (GRPNVGKS), 56–60 (DTGGF), 119–122 (NKID), 182–189 (GRPNVGKS), 229–233 (DTAGI), and 294–297 (NKWD) contribute to the GTP site. Positions 352–436 (RRITTSDLNR…PMRLLFKGRE (85 aa)) constitute a KH-like domain.

This sequence belongs to the TRAFAC class TrmE-Era-EngA-EngB-Septin-like GTPase superfamily. EngA (Der) GTPase family. Associates with the 50S ribosomal subunit.

Its function is as follows. GTPase that plays an essential role in the late steps of ribosome biogenesis. In Geotalea uraniireducens (strain Rf4) (Geobacter uraniireducens), this protein is GTPase Der.